The primary structure comprises 431 residues: Salivary plasminogen activator beta (431 aa).

A signal peptide spans 1–36; it reads MVNTMKTKLLCVLLLCGAVFSLPRQETYRQLARGSR. Positions 37 to 75 constitute an EGF-like domain; sequence AYGGCSELRCFNGGTCWQAASFSDFVCQCPKGYTGKQCE. Disulfide bonds link Cys41-Cys52, Cys46-Cys63, Cys65-Cys74, Cys82-Cys163, Cys103-Cys145, Cys134-Cys158, Cys168-Cys299, Cys211-Cys227, Cys219-Cys288, Cys313-Cys388, Cys345-Cys361, and Cys378-Cys406. One can recognise a Kringle domain in the interval 82-163; that stretch reads CYKDQGVTYR…ILEFCSVPVC (82 aa). N-linked (GlcNAc...) asparagine glycosylation occurs at Asn139. Residues 180–430 enclose the Peptidase S1 domain; the sequence is STGGLFTDIT…YLGWIRDNMR (251 aa). Residues His226 and Asp275 each act as charge relay system in the active site. N-linked (GlcNAc...) asparagine glycosylation is present at Asn352. The active-site Charge relay system is the Ser382.

This sequence belongs to the peptidase S1 family. As to quaternary structure, monomer.

Its subcellular location is the secreted. The catalysed reaction is Specific cleavage of Arg-|-Val bond in plasminogen to form plasmin.. Functionally, probably essential to support the feeding habits of this exclusively haematophagous animal. Probable potent thrombolytic agent. This is Salivary plasminogen activator beta from Desmodus rotundus (Vampire bat).